Consider the following 183-residue polypeptide: DELTA-miturgitoxin-Cp1c (183 aa).

Residues 1–20 (MKFSLFFSVFFLAVLHACLS) form the signal peptide. The propeptide occupies 21–47 (ESEIDLEDEEHFMSSDSFLSEIQDESR). The Processing quadruplet motif motif lies at 44–47 (DESR). Intrachain disulfides connect C51-C66, C58-C75, C65-C88, C77-C86, C115-C130, C122-C139, C129-C157, and C141-C155. Residues 164 to 177 (QAIEGALRIAKKLI) form a predicted alpha-helix region. Tryptophan amide is present on W181.

This sequence belongs to the neurotoxin 19 (CSTX) family. Double-CSTX subfamily. Cleavage of the propeptide depends on the processing quadruplet motif (XXXR, with at least one of X being E). In terms of tissue distribution, expressed by the venom gland.

The protein localises to the secreted. It is found in the target cell membrane. Spider venom toxin that exhibits cytolytic activity by forming an alpha-helix across the membrane. Lethal to insect larvae. Causes instant paralysis and death in the larvae of the flesh fly (S.carnaria) at doses of 20 ug/g, at doses of less than 10 ug/g causes reversible paralysis. Has cytolytic activity against insect Sf9 cells. Causes stable and irreversible depolarization of fly muscle fibers, leading to contracture at higher toxin concentrations. Destabilizes membranes. The chain is DELTA-miturgitoxin-Cp1c from Cheiracanthium punctorium (Yellow sac spider).